The primary structure comprises 312 residues: Methionyl-tRNA formyltransferase (312 aa).

111 to 114 (SLLP) provides a ligand contact to (6S)-5,6,7,8-tetrahydrofolate.

This sequence belongs to the Fmt family.

It catalyses the reaction L-methionyl-tRNA(fMet) + (6R)-10-formyltetrahydrofolate = N-formyl-L-methionyl-tRNA(fMet) + (6S)-5,6,7,8-tetrahydrofolate + H(+). In terms of biological role, attaches a formyl group to the free amino group of methionyl-tRNA(fMet). The formyl group appears to play a dual role in the initiator identity of N-formylmethionyl-tRNA by promoting its recognition by IF2 and preventing the misappropriation of this tRNA by the elongation apparatus. The protein is Methionyl-tRNA formyltransferase of Myxococcus xanthus (strain DK1622).